The following is a 1167-amino-acid chain: ATP-dependent helicase/nuclease subunit A (1167 aa).

One can recognise a UvrD-like helicase ATP-binding domain in the interval 2–451; sequence KNWTAEQMRA…IELSLNFRSR (450 aa). 23–30 lines the ATP pocket; that stretch reads AAAGAGKT. A UvrD-like helicase C-terminal domain is found at 478–768; that stretch reads KAFLKKGADY…RVMSVHKSKG (291 aa).

The protein belongs to the helicase family. AddA subfamily. As to quaternary structure, heterodimer of AddA and AddB/RexB. Requires Mg(2+) as cofactor.

It carries out the reaction Couples ATP hydrolysis with the unwinding of duplex DNA by translocating in the 3'-5' direction.. It catalyses the reaction ATP + H2O = ADP + phosphate + H(+). In terms of biological role, the heterodimer acts as both an ATP-dependent DNA helicase and an ATP-dependent, dual-direction single-stranded exonuclease. Recognizes the chi site generating a DNA molecule suitable for the initiation of homologous recombination. The AddA nuclease domain is required for chi fragment generation; this subunit has the helicase and 3' -&gt; 5' nuclease activities. This chain is ATP-dependent helicase/nuclease subunit A, found in Carboxydothermus hydrogenoformans (strain ATCC BAA-161 / DSM 6008 / Z-2901).